A 589-amino-acid chain; its full sequence is Protein NRT1/ PTR FAMILY 7.2 (589 aa).

2 consecutive transmembrane segments (helical) span residues Trp-32–Val-52 and Trp-78–Gly-98. Thr-102 carries the phosphothreonine modification. The next 10 membrane-spanning stretches (helical) occupy residues Ile-105–Leu-125, Val-147–Ile-167, Ile-187–Val-207, Trp-217–Ile-237, Ile-343–Val-363, Ile-377–Tyr-397, Met-423–His-443, Ile-464–Gly-484, Leu-504–Met-524, and Phe-548–Lys-568.

The protein belongs to the major facilitator superfamily. Proton-dependent oligopeptide transporter (POT/PTR) (TC 2.A.17) family. In terms of tissue distribution, expressed in xylem parenchyma cells within the vasculature. Expressed in siliques and flowers. Higher expression in shoots than in roots.

The protein resides in the cell membrane. Its function is as follows. Low-affinity nitrate transporter. Involved in nitrate removal from xylem sap. Not involved in oligopeptides transport. The protein is Protein NRT1/ PTR FAMILY 7.2 (NPF7.2) of Arabidopsis thaliana (Mouse-ear cress).